We begin with the raw amino-acid sequence, 351 residues long: Alanine racemase (351 aa).

Catalysis depends on lysine 34, which acts as the Proton acceptor; specific for D-alanine. Lysine 34 is modified (N6-(pyridoxal phosphate)lysine). Substrate is bound at residue arginine 126. The active-site Proton acceptor; specific for L-alanine is tyrosine 248. Methionine 296 serves as a coordination point for substrate.

The protein belongs to the alanine racemase family. Requires pyridoxal 5'-phosphate as cofactor.

The catalysed reaction is L-alanine = D-alanine. It participates in amino-acid biosynthesis; D-alanine biosynthesis; D-alanine from L-alanine: step 1/1. Its function is as follows. Catalyzes the interconversion of L-alanine and D-alanine. May also act on other amino acids. The protein is Alanine racemase (alr) of Deinococcus radiodurans (strain ATCC 13939 / DSM 20539 / JCM 16871 / CCUG 27074 / LMG 4051 / NBRC 15346 / NCIMB 9279 / VKM B-1422 / R1).